A 78-amino-acid polypeptide reads, in one-letter code: Vacuolar ATPase assembly integral membrane protein VMA21 (78 aa).

Topologically, residues Met-1–Val-14 are cytoplasmic. Residues Phe-15–Phe-35 traverse the membrane as a helical segment. The Lumenal portion of the chain corresponds to Ser-36–Asn-38. Residues Ala-39–Val-59 traverse the membrane as a helical segment. At Ala-60–Arg-78 the chain is on the cytoplasmic side. A Prevents secretion from ER motif is present at residues Lys-75 to Arg-78.

Belongs to the VMA21 family.

It localises to the endoplasmic reticulum membrane. The protein resides in the endoplasmic reticulum-Golgi intermediate compartment membrane. Its subcellular location is the cytoplasmic vesicle. It is found in the COPII-coated vesicle membrane. Functionally, required for the assembly of the V0 complex of the vacuolar ATPase (V-ATPase) in the endoplasmic reticulum. This is Vacuolar ATPase assembly integral membrane protein VMA21 from Debaryomyces hansenii (strain ATCC 36239 / CBS 767 / BCRC 21394 / JCM 1990 / NBRC 0083 / IGC 2968) (Yeast).